The primary structure comprises 309 residues: GATA transcription factor 25 (309 aa).

Positions 1–35 (MFGRHSIIPNNQIGTASASAGEDHVSASATSGHIP) are disordered. Residues 8 to 18 (IPNNQIGTASA) show a composition bias toward polar residues. The Tify domain maps to 77–112 (PPEGANQLTISFRGQVYVFDAVGADKVDAVLSLLGG). Residues 146 to 188 (RAQSLDRFRKKRNARCFEKKVRYGVRQEVALRMARNKGQFTSS) form the CCT domain. Polar residues predominate over residues 187–202 (SSKMTDGAYNSGTDQD). Residues 187 to 207 (SSKMTDGAYNSGTDQDSAQDD) are disordered. Residues 208–267 (AHPEISCTHCGISSKCTPMMRRGPSGPRTLCNACGLFWANRGTLRDLSKKTEENQLALMK) form a GATA-type zinc finger. The segment at 290 to 309 (EHTSMVSLANGDNSNLLGDH) is disordered. Residues 293–309 (SMVSLANGDNSNLLGDH) are compositionally biased toward polar residues.

This sequence belongs to the type IV zinc-finger family. Class C subfamily. Predominantly expressed in shoot apices, inflorescences and roots.

It localises to the nucleus. Transcriptional activator that specifically binds 5'-GATA-3' or 5'-GAT-3' motifs within gene promoters. This is GATA transcription factor 25 (GATA25) from Arabidopsis thaliana (Mouse-ear cress).